Reading from the N-terminus, the 564-residue chain is CTP synthase (564 aa).

An amidoligase domain region spans residues 1-265; the sequence is MTKFVFVTGG…DEIVCHRLDI (265 aa). S13 contacts CTP. S13 contacts UTP. Residues 14–19 and D71 contribute to the ATP site; that span reads SLGKGI. Mg(2+) is bound by residues D71 and E139. CTP-binding positions include 146–148, 186–191, and K222; these read DIE and KTKPTQ. Residues 186 to 191 and K222 contribute to the UTP site; that span reads KTKPTQ. Residues 290-543 enclose the Glutamine amidotransferase type-1 domain; sequence SIALVGKYVD…IQAAISFAGQ (254 aa). G351 is an L-glutamine binding site. Residue C378 is the Nucleophile; for glutamine hydrolysis of the active site. L-glutamine is bound by residues 379-382, E402, and R469; that span reads LGMQ. Catalysis depends on residues H516 and E518.

This sequence belongs to the CTP synthase family. As to quaternary structure, homotetramer.

It carries out the reaction UTP + L-glutamine + ATP + H2O = CTP + L-glutamate + ADP + phosphate + 2 H(+). The catalysed reaction is L-glutamine + H2O = L-glutamate + NH4(+). It catalyses the reaction UTP + NH4(+) + ATP = CTP + ADP + phosphate + 2 H(+). The protein operates within pyrimidine metabolism; CTP biosynthesis via de novo pathway; CTP from UDP: step 2/2. Allosterically activated by GTP, when glutamine is the substrate; GTP has no effect on the reaction when ammonia is the substrate. The allosteric effector GTP functions by stabilizing the protein conformation that binds the tetrahedral intermediate(s) formed during glutamine hydrolysis. Inhibited by the product CTP, via allosteric rather than competitive inhibition. Functionally, catalyzes the ATP-dependent amination of UTP to CTP with either L-glutamine or ammonia as the source of nitrogen. Regulates intracellular CTP levels through interactions with the four ribonucleotide triphosphates. The protein is CTP synthase of Nitrosomonas europaea (strain ATCC 19718 / CIP 103999 / KCTC 2705 / NBRC 14298).